The sequence spans 258 residues: Regulatory protein RecX (258 aa).

It belongs to the RecX family.

The protein localises to the cytoplasm. In terms of biological role, modulates RecA activity. The polypeptide is Regulatory protein RecX (Streptococcus pneumoniae serotype 19F (strain G54)).